Consider the following 664-residue polypeptide: uncharacterized protein (664 aa).

This is an uncharacterized protein from Sinorhizobium fredii (strain NBRC 101917 / NGR234).